Reading from the N-terminus, the 246-residue chain is MRHQDVAIIIPSRLSSTRLKQKPLQLIGSITLIERVFTQVNQAGLEHTYVATDSEEIASVITKVGGKVIFTDSAIPTGTDRTYEAFKLIPNNQNINYIVNVQGDMPFIEPSSILKIIEYLKNSKYDIVTPIVKVDRESVKASSNVTVAVDSAGTALYFSRSLIPNGAEEFLYHVGMYGFRKNALEKFVSLKPTFLEKTERLEQLRVLENGMTIGTCLVENVPISVDTEEDLKKAVKFYENISKLGL.

The protein belongs to the KdsB family.

Its subcellular location is the cytoplasm. The enzyme catalyses 3-deoxy-alpha-D-manno-oct-2-ulosonate + CTP = CMP-3-deoxy-beta-D-manno-octulosonate + diphosphate. The protein operates within nucleotide-sugar biosynthesis; CMP-3-deoxy-D-manno-octulosonate biosynthesis; CMP-3-deoxy-D-manno-octulosonate from 3-deoxy-D-manno-octulosonate and CTP: step 1/1. Its pathway is bacterial outer membrane biogenesis; lipopolysaccharide biosynthesis. Functionally, activates KDO (a required 8-carbon sugar) for incorporation into bacterial lipopolysaccharide in Gram-negative bacteria. This chain is 3-deoxy-manno-octulosonate cytidylyltransferase, found in Rickettsia africae (strain ESF-5).